Consider the following 344-residue polypeptide: Thioredoxin domain-containing protein 15 (344 aa).

Residues 1 to 20 (MQLLCWWQVLLWVLGLPAHG) form the signal peptide. At 21–305 (LEVAEDSGHP…GPLPSTLIKT (285 aa)) the chain is on the extracellular side. Disordered regions lie at residues 55 to 119 (DHRD…FGLQ) and 136 to 156 (GVTEAEPVATEDANSTDSLKS). A compositionally biased stretch (basic and acidic residues) spans 88–97 (EDQRSPEAHD). Positions 163 to 280 (ERNVTGLENF…LKIFIFNQTG (118 aa)) constitute a Thioredoxin domain. 4 N-linked (GlcNAc...) asparagine glycosylation sites follow: N171, N178, N190, and N277. The helical transmembrane segment at 306–326 (VDWLLVFSLFFLISFIMYATI) threads the bilayer. The Cytoplasmic portion of the chain corresponds to 327 to 344 (RTESIRWLIPGQEQEHAE).

The protein localises to the cell projection. Its subcellular location is the cilium membrane. Functionally, acts as a positive regulator of ciliary hedgehog signaling. Required for cilia biogenesis. This Mus musculus (Mouse) protein is Thioredoxin domain-containing protein 15 (Txndc15).